Reading from the N-terminus, the 609-residue chain is MEGKPMRRCTNIRPGETGMDVTSRCTLGDPNKLPEGVPQPARMPYISDKHPRQTLEVINLLRKHRELCDVVLVVGAKKIYAHRVILSACSPYFRAMFTGELAESRQTEVVIRDIDERAMELLIDFAYTSQITVEEGNVQTLLPAACLLQLAEIQEACCEFLKRQLDPSNCLGIRAFADTHSCRELLRIADKFTQHNFQEVMESEEFMLLPANQLIDIISSDELNVRSEEQVFNAVMAWVKYSTQERRPQLPQVLQHVRLPLLSPKFLVGTVGSDPLIKSDEECRDLVDEAKNYLLLPQERPLMQGPRTRPRKPIRCGEVLFAVGGWCSGDAISSVERYDPQTNEWRMVASMSKRRCGVGVSVLDDLLYAVGGHDGSSYLNSVERYDPKTNQWSSDVAPTSTCRTSVGVAVLGGFLYAVGGQDGVSCLNIVERYDPKENKWTRVASMSTRRLGVAVAVLGGFLYAVGGSDGTSPLNTVERYNPQENRWHTIAPMGTRRKHLGCAVYQDMIYAVGGRDDTTELSSAERYNPRTNQWSPVVAMTSRRSGVGLAVVNGQLMAVRGFDGTTYLKTIEVFDPDANTWRLYGGMNYRRLGGGVGVIKMTHCESHIW.

The BTB domain maps to 68–135; that stretch reads CDVVLVVGAK…AYTSQITVEE (68 aa). The BACK domain occupies 170 to 272; that stretch reads CLGIRAFADT…SPKFLVGTVG (103 aa). 6 Kelch repeats span residues 319–365, 367–413, 414–460, 462–507, 509–554, and 556–601; these read VLFA…VLDD, LYAV…VLGG, FLYA…VLGG, LYAV…VYQD, IYAV…VVNG, and LMAV…VIKM.

Component of the BCR(KLHL20) E3 ubiquitin ligase complex, at least composed of CUL3, KLHL20 and RBX1. Interacts with PDZ-RhoGEF/ARHGEF11, DAPK1, PML and CORO7. Interacts with F-actin. Interacts with IFN-gamma (IFNG). Interacts (via kelch repeats) with IVNS1ABP (via kelch repeats); this interaction blocks the assembly of CUL3-KLHL20 complex.

Its subcellular location is the cytoplasm. It localises to the perinuclear region. It is found in the nucleus. The protein resides in the golgi apparatus. The protein localises to the trans-Golgi network. Its subcellular location is the cell projection. It localises to the axon. It is found in the dendrite. It functions in the pathway protein modification; protein ubiquitination. Its function is as follows. Substrate-specific adapter of a BCR (BTB-CUL3-RBX1) E3 ubiquitin-protein ligase complex involved in interferon response and anterograde Golgi to endosome transport. The BCR(KLHL20) E3 ubiquitin ligase complex mediates the ubiquitination of DAPK1, leading to its degradation by the proteasome, thereby acting as a negative regulator of apoptosis. The BCR(KLHL20) E3 ubiquitin ligase complex also specifically mediates 'Lys-33'-linked ubiquitination. Involved in anterograde Golgi to endosome transport by mediating 'Lys-33'-linked ubiquitination of CORO7, promoting interaction between CORO7 and EPS15, thereby facilitating actin polymerization and post-Golgi trafficking. Also acts as a regulator of endothelial migration during angiogenesis by controlling the activation of Rho GTPases. The BCR(KLHL20) E3 ubiquitin ligase complex acts as a regulator of neurite outgrowth by mediating ubiquitination and degradation of PDZ-RhoGEF/ARHGEF11. The protein is Kelch-like protein 20 (KLHL20) of Pongo abelii (Sumatran orangutan).